Here is a 118-residue protein sequence, read N- to C-terminus: Protein RALF-like 24 (118 aa).

An N-terminal signal peptide occupies residues 1–22; it reads MSRSLALVYLSLLCLQTHLSIS. Residues 23–63 constitute a propeptide, removed in mature form; sequence VTVPIPSVNGEIDAMLNRNGVIGEEEGEEMMPSEISRRVMM. Cystine bridges form between C81–C91 and C103–C109.

This sequence belongs to the plant rapid alkalinization factor (RALF) family. Proteolytically cleaved, probably by S1P, a subtilisin-like serine protease (subtilase).

It localises to the secreted. Its function is as follows. Cell signaling peptide that may regulate plant stress, growth, and development. Mediates a rapid alkalinization of extracellular space by mediating a transient increase in the cytoplasmic Ca(2+) concentration leading to a calcium-dependent signaling events through a cell surface receptor and a concomitant activation of some intracellular mitogen-activated protein kinases. This chain is Protein RALF-like 24 (RALFL24), found in Arabidopsis thaliana (Mouse-ear cress).